The sequence spans 239 residues: Type III pantothenate kinase (239 aa).

6 to 13 (DAGNTRLK) serves as a coordination point for ATP. Residues Y87 and 94-97 (GADR) contribute to the substrate site. The active-site Proton acceptor is D96. T119 lines the ATP pocket. S169 provides a ligand contact to substrate.

This sequence belongs to the type III pantothenate kinase family. In terms of assembly, homodimer. NH4(+) is required as a cofactor. Requires K(+) as cofactor.

It localises to the cytoplasm. It carries out the reaction (R)-pantothenate + ATP = (R)-4'-phosphopantothenate + ADP + H(+). The protein operates within cofactor biosynthesis; coenzyme A biosynthesis; CoA from (R)-pantothenate: step 1/5. Catalyzes the phosphorylation of pantothenate (Pan), the first step in CoA biosynthesis. This Laribacter hongkongensis (strain HLHK9) protein is Type III pantothenate kinase.